The chain runs to 215 residues: Probable phosphoglycerate mutase GpmB (215 aa).

Substrate contacts are provided by residues 8 to 15 (RHGETQWN), 21 to 22 (QG), Arg-58, Lys-60, 82 to 85 (ELDM), 104 to 105 (RR), and 151 to 152 (GI). The active-site Tele-phosphohistidine intermediate is the His-9. Glu-82 serves as the catalytic Proton donor/acceptor.

It belongs to the phosphoglycerate mutase family. GpmB subfamily.

The enzyme catalyses (2R)-2-phosphoglycerate = (2R)-3-phosphoglycerate. It functions in the pathway carbohydrate degradation; glycolysis; pyruvate from D-glyceraldehyde 3-phosphate: step 3/5. This Salmonella typhi protein is Probable phosphoglycerate mutase GpmB.